Here is a 175-residue protein sequence, read N- to C-terminus: MPSSALLYCLIFLAGVAASIKSENSCIHFPTSLPHMLRELRAAFGPVKSFFQTKDQMGDLLLTGSLLEDFKGYLGCQALSEMIQFYLEDVMPKAESDGEDIKEHVNSLGEKLKTLRLRLRRCHQFLPCENKSKAVEEVKSAFSKLQERGVYKAMGEFDIFINYIEAYMTMKMRKN.

The signal sequence occupies residues 1–18 (MPSSALLYCLIFLAGVAA). Intrachain disulfides connect C26/C122 and C76/C128. An N-linked (GlcNAc...) asparagine glycan is attached at N130.

The protein belongs to the IL-10 family. As to quaternary structure, homodimer. Interacts with IL10RA and IL10RB.

The protein localises to the secreted. In terms of biological role, major immune regulatory cytokine that acts on many cells of the immune system where it has profound anti-inflammatory functions, limiting excessive tissue disruption caused by inflammation. Mechanistically, IL10 binds to its heterotetrameric receptor comprising IL10RA and IL10RB leading to JAK1 and STAT2-mediated phosphorylation of STAT3. In turn, STAT3 translocates to the nucleus where it drives expression of anti-inflammatory mediators. Targets antigen-presenting cells (APCs) such as macrophages and monocytes and inhibits their release of pro-inflammatory cytokines including granulocyte-macrophage colony-stimulating factor /GM-CSF, granulocyte colony-stimulating factor/G-CSF, IL-1 alpha, IL-1 beta, IL-6, IL-8 and TNF-alpha. Also interferes with antigen presentation by reducing the expression of MHC-class II and co-stimulatory molecules, thereby inhibiting their ability to induce T cell activation. In addition, controls the inflammatory response of macrophages by reprogramming essential metabolic pathways including mTOR signaling. The sequence is that of Interleukin-10 (IL10) from Sus scrofa (Pig).